The chain runs to 776 residues: Protocadherin beta-16 (776 aa).

An N-terminal signal peptide occupies residues 1–28 (MEIGWMHNRRQRQVLVFFVLLSLSGAGA). At 29–690 (ELGSYSVVEE…TQANSLTVYL (662 aa)) the chain is on the extracellular side. 5 consecutive Cadherin domains span residues 35 to 133 (VVEE…SPMF), 138 to 242 (MILK…APEF), 247 to 347 (YKVQ…PPQV), 352 to 451 (LTSP…APTF), and 456 to 561 (YTLF…SPFV). N-linked (GlcNAc...) asparagine glycosylation is found at Asn-418 and Asn-436. Asn-567 carries N-linked (GlcNAc...) asparagine glycosylation. The Cadherin 6 domain maps to 568 to 671 (GSAPCTELVP…LVDGFSQPFL (104 aa)). The helical transmembrane segment at 691 to 711 (VVALASVSSLFLFSVLLFVAV) threads the bilayer. Residues 712-776 (RLCRRSRAAS…LKPIIPNFSP (65 aa)) lie on the Cytoplasmic side of the membrane.

Its subcellular location is the membrane. Potential calcium-dependent cell-adhesion protein. May be involved in the establishment and maintenance of specific neuronal connections in the brain. The chain is Protocadherin beta-16 from Homo sapiens (Human).